The primary structure comprises 179 residues: Peptide deformylase 2 (179 aa).

Cys102 and His144 together coordinate Fe cation. Glu145 is an active-site residue. A Fe cation-binding site is contributed by His148.

This sequence belongs to the polypeptide deformylase family. It depends on Fe(2+) as a cofactor.

It carries out the reaction N-terminal N-formyl-L-methionyl-[peptide] + H2O = N-terminal L-methionyl-[peptide] + formate. Its function is as follows. Removes the formyl group from the N-terminal Met of newly synthesized proteins. Requires at least a dipeptide for an efficient rate of reaction. N-terminal L-methionine is a prerequisite for activity but the enzyme has broad specificity at other positions. The sequence is that of Peptide deformylase 2 from Nostoc sp. (strain PCC 7120 / SAG 25.82 / UTEX 2576).